A 576-amino-acid polypeptide reads, in one-letter code: Arginine--tRNA ligase (576 aa).

The 'HIGH' region signature appears at 126–136; the sequence is ANPTGPMHIGH.

Belongs to the class-I aminoacyl-tRNA synthetase family. In terms of assembly, monomer.

It is found in the cytoplasm. It carries out the reaction tRNA(Arg) + L-arginine + ATP = L-arginyl-tRNA(Arg) + AMP + diphosphate. The protein is Arginine--tRNA ligase of Rickettsia canadensis (strain McKiel).